Reading from the N-terminus, the 303-residue chain is UDP-3-O-acyl-N-acetylglucosamine deacetylase (303 aa).

Zn(2+) contacts are provided by H78, H237, and D241. The active-site Proton donor is H264.

The protein belongs to the LpxC family. Requires Zn(2+) as cofactor.

It carries out the reaction a UDP-3-O-[(3R)-3-hydroxyacyl]-N-acetyl-alpha-D-glucosamine + H2O = a UDP-3-O-[(3R)-3-hydroxyacyl]-alpha-D-glucosamine + acetate. The protein operates within glycolipid biosynthesis; lipid IV(A) biosynthesis; lipid IV(A) from (3R)-3-hydroxytetradecanoyl-[acyl-carrier-protein] and UDP-N-acetyl-alpha-D-glucosamine: step 2/6. Its function is as follows. Catalyzes the hydrolysis of UDP-3-O-myristoyl-N-acetylglucosamine to form UDP-3-O-myristoylglucosamine and acetate, the committed step in lipid A biosynthesis. The polypeptide is UDP-3-O-acyl-N-acetylglucosamine deacetylase (Pseudomonas fluorescens (strain ATCC BAA-477 / NRRL B-23932 / Pf-5)).